Reading from the N-terminus, the 202-residue chain is UPF0056 membrane protein PH0214 (202 aa).

The next 6 membrane-spanning stretches (helical) occupy residues 5–25 (ILSS…ILLV), 47–67 (IGFI…QDIF), 76–96 (VAGG…GGMV), 104–124 (ILAL…AAIT), 135–155 (IIVS…LMMI), and 174–194 (IIGL…AGGI).

This sequence belongs to the UPF0056 (MarC) family.

The protein resides in the cell membrane. This is UPF0056 membrane protein PH0214 from Pyrococcus horikoshii (strain ATCC 700860 / DSM 12428 / JCM 9974 / NBRC 100139 / OT-3).